A 325-amino-acid chain; its full sequence is Odorant receptor 131-2 (325 aa).

Topologically, residues 1 to 22 (MNSTSNSSLGNTFISKTLKEKS) are extracellular. N-linked (GlcNAc...) asparagine glycans are attached at residues asparagine 2 and asparagine 6. A helical transmembrane segment spans residues 23 to 43 (LTVQVLVGILLYVNGLMIFTF). At 44–54 (LKKETFRDTRY) the chain is on the cytoplasmic side. The chain crosses the membrane as a helical span at residues 55–75 (ILFAQTLFVDSALMLFADLTL). Residues 76 to 91 (VGSAYELFIHIISCYI) are Extracellular-facing. A disulfide bond links cysteine 89 and cysteine 170. A helical membrane pass occupies residues 92 to 112 (FCTVMALLSICSPVTLVAMCL). At 113–135 (ERYVAICLPLRHASISSPKNTIN) the chain is on the cytoplasmic side. A helical membrane pass occupies residues 136 to 156 (GLLIIWGVSSVIPLFIFIVSF). At 157-190 (TYTPPNAMNSYVVCSNDVMFQVKWLAEMRALSQQ) the chain is on the extracellular side. A helical transmembrane segment spans residues 191-211 (LLFVIMLCIVGSTYIKIMVAA). The Cytoplasmic segment spans residues 212–227 (KSASAENKKSTYKGLR). The helical transmembrane segment at 228–248 (TVILHGLQLILGMMQLITPYI) threads the bilayer. Residues 249–267 (DILTLKVDIMLFINVKFSN) lie on the Extracellular side of the membrane. Residues 268-285 (FMLFWIFPRCLSPLVYGL) form a helical membrane-spanning segment. Residues 286 to 325 (RDKKFYNALKYYAFCGIYVCKKHKIKDSKTIRGAVSIAIY) are Cytoplasmic-facing.

Belongs to the G-protein coupled receptor 1 family. In terms of assembly, homodimer. Monomer.

Its subcellular location is the cell membrane. It localises to the cytoplasm. Its function is as follows. Probable olfactory receptor. The protein is Odorant receptor 131-2 of Danio rerio (Zebrafish).